Consider the following 304-residue polypeptide: ATP phosphoribosyltransferase (304 aa).

Belongs to the ATP phosphoribosyltransferase family. Long subfamily. The cofactor is Mg(2+).

The protein localises to the cytoplasm. The catalysed reaction is 1-(5-phospho-beta-D-ribosyl)-ATP + diphosphate = 5-phospho-alpha-D-ribose 1-diphosphate + ATP. The protein operates within amino-acid biosynthesis; L-histidine biosynthesis; L-histidine from 5-phospho-alpha-D-ribose 1-diphosphate: step 1/9. Its activity is regulated as follows. Feedback inhibited by histidine. Its function is as follows. Catalyzes the condensation of ATP and 5-phosphoribose 1-diphosphate to form N'-(5'-phosphoribosyl)-ATP (PR-ATP). Has a crucial role in the pathway because the rate of histidine biosynthesis seems to be controlled primarily by regulation of HisG enzymatic activity. This is ATP phosphoribosyltransferase from Xylella fastidiosa (strain 9a5c).